The chain runs to 152 residues: Large ribosomal subunit protein bL21 (152 aa).

Residues 115 to 152 form a disordered region; it reads VTSISNGEKPKKATTSAKPNTKKPSTAVKSSKVEKTPE. A compositionally biased stretch (polar residues) spans 127-143; it reads ATTSAKPNTKKPSTAVK.

Belongs to the bacterial ribosomal protein bL21 family. In terms of assembly, part of the 50S ribosomal subunit. Contacts protein L20.

In terms of biological role, this protein binds to 23S rRNA in the presence of protein L20. The sequence is that of Large ribosomal subunit protein bL21 from Prochlorococcus marinus (strain SARG / CCMP1375 / SS120).